A 300-amino-acid chain; its full sequence is Ribonuclease HIII (300 aa).

In terms of domain architecture, RNase H type-2 spans 83-300 (IPIIGSDEVG…THKAQALLTK (218 aa)). Residues Asp89, Glu90, and Asp194 each coordinate a divalent metal cation.

Belongs to the RNase HII family. RnhC subfamily. Mn(2+) serves as cofactor. The cofactor is Mg(2+).

Its subcellular location is the cytoplasm. The enzyme catalyses Endonucleolytic cleavage to 5'-phosphomonoester.. Endonuclease that specifically degrades the RNA of RNA-DNA hybrids. In Streptococcus pyogenes serotype M4 (strain MGAS10750), this protein is Ribonuclease HIII.